Consider the following 154-residue polypeptide: 6,7-dimethyl-8-ribityllumazine synthase (154 aa).

Residues F22, 57 to 59 (AYE), and 81 to 83 (AVI) contribute to the 5-amino-6-(D-ribitylamino)uracil site. A (2S)-2-hydroxy-3-oxobutyl phosphate-binding site is contributed by 86-87 (GT). Residue H89 is the Proton donor of the active site. F114 contacts 5-amino-6-(D-ribitylamino)uracil. Residue R128 participates in (2S)-2-hydroxy-3-oxobutyl phosphate binding.

Belongs to the DMRL synthase family. In terms of assembly, forms an icosahedral capsid composed of 60 subunits, arranged as a dodecamer of pentamers.

The enzyme catalyses (2S)-2-hydroxy-3-oxobutyl phosphate + 5-amino-6-(D-ribitylamino)uracil = 6,7-dimethyl-8-(1-D-ribityl)lumazine + phosphate + 2 H2O + H(+). It participates in cofactor biosynthesis; riboflavin biosynthesis; riboflavin from 2-hydroxy-3-oxobutyl phosphate and 5-amino-6-(D-ribitylamino)uracil: step 1/2. Functionally, catalyzes the formation of 6,7-dimethyl-8-ribityllumazine by condensation of 5-amino-6-(D-ribitylamino)uracil with 3,4-dihydroxy-2-butanone 4-phosphate. This is the penultimate step in the biosynthesis of riboflavin. In Colwellia psychrerythraea (strain 34H / ATCC BAA-681) (Vibrio psychroerythus), this protein is 6,7-dimethyl-8-ribityllumazine synthase.